Consider the following 747-residue polypeptide: Ubiquitin carboxyl-terminal hydrolase 13 (747 aa).

The USP domain maps to 140–668 (FGYENFGNTC…TAYVLFYKAM (529 aa)). Residue Cys149 is the Nucleophile of the active site. Disordered regions lie at residues 172–305 (PKKS…RPPD) and 318–367 (YENP…RKKS). Over residues 174–183 (KSRESDQPRK) the composition is skewed to basic and acidic residues. A Phosphoserine modification is found at Ser198. Positions 225-235 (PVNSVNSNTAG) are enriched in polar residues. Positions 251 to 260 (HVQDNNKKEG) are enriched in basic and acidic residues. Polar residues predominate over residues 319–343 (ENPSRGSSNSNNLDLKGESNSSLST). His619 (proton acceptor) is an active-site residue.

It belongs to the peptidase C19 family.

It catalyses the reaction Thiol-dependent hydrolysis of ester, thioester, amide, peptide and isopeptide bonds formed by the C-terminal Gly of ubiquitin (a 76-residue protein attached to proteins as an intracellular targeting signal).. The polypeptide is Ubiquitin carboxyl-terminal hydrolase 13 (UBP13) (Saccharomyces cerevisiae (strain ATCC 204508 / S288c) (Baker's yeast)).